The sequence spans 245 residues: 1-(5-phosphoribosyl)-5-[(5-phosphoribosylamino)methylideneamino] imidazole-4-carboxamide isomerase (245 aa).

The active-site Proton acceptor is D7. The active-site Proton donor is the D129.

Belongs to the HisA/HisF family.

Its subcellular location is the cytoplasm. It catalyses the reaction 1-(5-phospho-beta-D-ribosyl)-5-[(5-phospho-beta-D-ribosylamino)methylideneamino]imidazole-4-carboxamide = 5-[(5-phospho-1-deoxy-D-ribulos-1-ylimino)methylamino]-1-(5-phospho-beta-D-ribosyl)imidazole-4-carboxamide. It functions in the pathway amino-acid biosynthesis; L-histidine biosynthesis; L-histidine from 5-phospho-alpha-D-ribose 1-diphosphate: step 4/9. The sequence is that of 1-(5-phosphoribosyl)-5-[(5-phosphoribosylamino)methylideneamino] imidazole-4-carboxamide isomerase from Psychromonas ingrahamii (strain DSM 17664 / CCUG 51855 / 37).